Reading from the N-terminus, the 98-residue chain is NADH-ubiquinone oxidoreductase chain 4L (98 aa).

3 helical membrane-spanning segments follow: residues 1 to 21 (MTLI…GLLM), 29 to 49 (ALLC…LTIL), and 61 to 81 (IILL…LVMV).

Belongs to the complex I subunit 4L family. Core subunit of respiratory chain NADH dehydrogenase (Complex I) which is composed of 45 different subunits.

It is found in the mitochondrion inner membrane. The catalysed reaction is a ubiquinone + NADH + 5 H(+)(in) = a ubiquinol + NAD(+) + 4 H(+)(out). Core subunit of the mitochondrial membrane respiratory chain NADH dehydrogenase (Complex I) which catalyzes electron transfer from NADH through the respiratory chain, using ubiquinone as an electron acceptor. Part of the enzyme membrane arm which is embedded in the lipid bilayer and involved in proton translocation. This Balaenoptera physalus (Fin whale) protein is NADH-ubiquinone oxidoreductase chain 4L (MT-ND4L).